The following is a 372-amino-acid chain: Pyrimidine monooxygenase RutA (372 aa).

Residues Ile57–Lys58, Asn123, Glu132, Arg148–Tyr149, and Ser198 each bind FMN.

The protein belongs to the NtaA/SnaA/DszA monooxygenase family. RutA subfamily.

The catalysed reaction is uracil + FMNH2 + NADH + O2 = (Z)-3-ureidoacrylate + FMN + NAD(+) + H2O + H(+). It carries out the reaction thymine + FMNH2 + NADH + O2 = (Z)-2-methylureidoacrylate + FMN + NAD(+) + H2O + H(+). Functionally, catalyzes the pyrimidine ring opening between N-3 and C-4 by an unusual flavin hydroperoxide-catalyzed mechanism, adding oxygen atoms in the process to yield ureidoacrylate peracid, that immediately reacts with FMN forming ureidoacrylate and FMN-N(5)-oxide. The FMN-N(5)-oxide reacts spontaneously with NADH to produce FMN. Requires the flavin reductase RutF to regenerate FMN in vivo. The chain is Pyrimidine monooxygenase RutA from Methylorubrum extorquens (strain PA1) (Methylobacterium extorquens).